The chain runs to 233 residues: Glucosamine-6-phosphate deaminase (233 aa).

Catalysis depends on Asp62, which acts as the Proton acceptor; for enolization step. Residue Asn128 is the For ring-opening step of the active site. His130 functions as the Proton acceptor; for ring-opening step in the catalytic mechanism. Catalysis depends on Glu135, which acts as the For ring-opening step.

The protein belongs to the glucosamine/galactosamine-6-phosphate isomerase family. NagB subfamily.

The catalysed reaction is alpha-D-glucosamine 6-phosphate + H2O = beta-D-fructose 6-phosphate + NH4(+). Its pathway is amino-sugar metabolism; N-acetylneuraminate degradation; D-fructose 6-phosphate from N-acetylneuraminate: step 5/5. Catalyzes the reversible isomerization-deamination of glucosamine 6-phosphate (GlcN6P) to form fructose 6-phosphate (Fru6P) and ammonium ion. The polypeptide is Glucosamine-6-phosphate deaminase (Streptococcus pneumoniae serotype 4 (strain ATCC BAA-334 / TIGR4)).